A 192-amino-acid polypeptide reads, in one-letter code: Ferritin-like protein (192 aa).

Residues His44, Glu48, and His102 each coordinate Fe(3+). A linker region spans residues 143–179 (RFDHDYADPHAHHDEHRDHLADMPSAGSSHEEVQPVA). Basic and acidic residues predominate over residues 149 to 163 (ADPHAHHDEHRDHLA). The segment at 149-192 (ADPHAHHDEHRDHLADMPSAGSSHEEVQPVAHKKKGFTVGSLIQ) is disordered. The targeting peptide stretch occupies residues 180–192 (HKKKGFTVGSLIQ).

In terms of assembly, homodimer, with 2 Fe atoms bound at the subunit interface (without encapsulin), probably also a dimer when encapsulated. 42 electron-dense accretions can be seen inside the nanocompartment which are probably this cargo protein, although perhaps up to one cargo dimer can be bound per shell protein.

It is found in the encapsulin nanocompartment. The catalysed reaction is 4 Fe(2+) + O2 + 4 H(+) = 4 Fe(3+) + 2 H2O. In terms of biological role, cargo protein of a type 1 encapsulin nanocompartment. A ferritin-like iron-binding protein probably involved in iron mineralization in the encapsulin nanocompartment. Has ferroxidase activity even when encapsulated, the rate is probably controlled by the rate of Fe flux across the nanocompartment pores. Part of the iron-mineralizing encapsulin-associated Firmicute (IMEF) system. 2 different cargo proteins have been identified (IMEF and Fer); when both are expressed in E.coli with the shell protein only IMEF is detected within the nanocompartment. E.coli expressing all 3 genes stores the largest amount of iron and is protected from Fe/H2O2-induced oxidative stress. The chain is Ferritin-like protein from Bacillus thermotolerans (Quasibacillus thermotolerans).